Consider the following 166-residue polypeptide: NAD(P)H-quinone oxidoreductase subunit I, chloroplastic (166 aa).

2 4Fe-4S ferredoxin-type domains span residues glycine 55 to lysine 84 and leucine 95 to glutamate 124. 8 residues coordinate [4Fe-4S] cluster: cysteine 64, cysteine 67, cysteine 70, cysteine 74, cysteine 104, cysteine 107, cysteine 110, and cysteine 114.

Belongs to the complex I 23 kDa subunit family. As to quaternary structure, NDH is composed of at least 16 different subunits, 5 of which are encoded in the nucleus. The cofactor is [4Fe-4S] cluster.

The protein localises to the plastid. The protein resides in the chloroplast thylakoid membrane. It carries out the reaction a plastoquinone + NADH + (n+1) H(+)(in) = a plastoquinol + NAD(+) + n H(+)(out). The enzyme catalyses a plastoquinone + NADPH + (n+1) H(+)(in) = a plastoquinol + NADP(+) + n H(+)(out). Functionally, NDH shuttles electrons from NAD(P)H:plastoquinone, via FMN and iron-sulfur (Fe-S) centers, to quinones in the photosynthetic chain and possibly in a chloroplast respiratory chain. The immediate electron acceptor for the enzyme in this species is believed to be plastoquinone. Couples the redox reaction to proton translocation, and thus conserves the redox energy in a proton gradient. This chain is NAD(P)H-quinone oxidoreductase subunit I, chloroplastic, found in Picradeniopsis absinthifolia (Hairyseed bahia).